We begin with the raw amino-acid sequence, 179 residues long: Casparian strip membrane protein 1 (179 aa).

Residues 1-17 (MKAGPLQLGVVPPANRA) lie on the Cytoplasmic side of the membrane. A helical transmembrane segment spans residues 18–38 (IAILDFFLRPIAIVGTLASAI). The Extracellular segment spans residues 39–67 (AMATTNQTLPFFSQFIRFRAKFNDLPSFT). Residue asparagine 44 is glycosylated (N-linked (GlcNAc...) asparagine). A helical membrane pass occupies residues 68–88 (FFVVASSIVSAYLILSLGFSI). The Cytoplasmic segment spans residues 89–100 (LHIAKSNLVNSR). A helical membrane pass occupies residues 101 to 121 (VLLLLLDTAAMGLLMAGSAAA). The Extracellular segment spans residues 122–154 (TAIVQLAHKGNNKVNWFAICQQYNSFCKRVSGS). A helical transmembrane segment spans residues 155 to 175 (LIGSYAGVVVLILLILLSGVA). Residues 176-179 (LSRR) are Cytoplasmic-facing.

It belongs to the Casparian strip membrane proteins (CASP) family. Homodimer and heterodimers.

The protein resides in the cell membrane. Regulates membrane-cell wall junctions and localized cell wall deposition. Required for establishment of the Casparian strip membrane domain (CSD) and the subsequent formation of Casparian strips, a cell wall modification of the root endodermis that determines an apoplastic barrier between the intraorganismal apoplasm and the extraorganismal apoplasm and prevents lateral diffusion. The polypeptide is Casparian strip membrane protein 1 (Lactuca sativa (Garden lettuce)).